A 558-amino-acid polypeptide reads, in one-letter code: Magnesium-chelatase 60 kDa subunit (558 aa).

Disordered regions lie at residues Met234–Met268 and Met298–Leu325. The segment covering Ala240–Asp254 has biased composition (acidic residues). The span at Met298 to Ala308 shows a compositional bias: low complexity. A VWFA domain is found at Val376–Ala555.

It belongs to the Mg-chelatase subunits D/I family.

It carries out the reaction protoporphyrin IX + Mg(2+) + ATP + H2O = Mg-protoporphyrin IX + ADP + phosphate + 3 H(+). It functions in the pathway porphyrin-containing compound metabolism; bacteriochlorophyll biosynthesis. Involved in bacteriochlorophyll biosynthesis; introduces a magnesium ion into protoporphyrin IX to yield Mg-protoporphyrin IX. The sequence is that of Magnesium-chelatase 60 kDa subunit (bchD) from Cereibacter sphaeroides (strain ATCC 17023 / DSM 158 / JCM 6121 / CCUG 31486 / LMG 2827 / NBRC 12203 / NCIMB 8253 / ATH 2.4.1.) (Rhodobacter sphaeroides).